We begin with the raw amino-acid sequence, 355 residues long: Peptide chain release factor 1 (355 aa).

An N5-methylglutamine modification is found at Gln-233.

Belongs to the prokaryotic/mitochondrial release factor family. Post-translationally, methylated by PrmC. Methylation increases the termination efficiency of RF1.

It localises to the cytoplasm. Peptide chain release factor 1 directs the termination of translation in response to the peptide chain termination codons UAG and UAA. The sequence is that of Peptide chain release factor 1 from Desulforudis audaxviator (strain MP104C).